The primary structure comprises 164 residues: Transforming protein STP (164 aa).

Residues 1 to 41 form a disordered region; that stretch reads MARGLGEGDPQENDESNGDPPHNTDERSDGDDGPTPYLPVT. A zinc finger lies at 122 to 135; it reads HSEHEQEGDKCTDC. A helical membrane pass occupies residues 136–161; that stretch reads SVTILLLLVIIVLLLIIIGLMLVIMF.

It localises to the membrane. In terms of biological role, stp is required for transformation, but it is not required for replication of the virus. The T-lymphocyte is the target cell for transformation by herpesvirus saimiri. The polypeptide is Transforming protein STP (1) (Saimiriine herpesvirus 2 (strain 11) (SaHV-2)).